Here is a 216-residue protein sequence, read N- to C-terminus: Ras-related protein Rab-5C (216 aa).

Ser30, Ala31, Gly33, Lys34, Ser35, Ser36, His47, Glu48, Thr53, and Gly79 together coordinate GTP. A Mg(2+)-binding site is contributed by Ser35. 2 consecutive short sequence motifs (switch) follow at residues Gln45–Ala57 and Ala78–Ala94. Residue Thr53 participates in Mg(2+) binding. Ser85 is subject to Phosphoserine. Positions 134, 135, 137, 165, and 166 each coordinate GTP. Residues Asn185–Asn216 are disordered. Polar residues predominate over residues Gln203–Asn216. Residues Cys213 and Cys214 are each lipidated (S-geranylgeranyl cysteine).

Belongs to the small GTPase superfamily. Rab family. As to quaternary structure, interacts with EEA1 and INCA1. Interacts with GDI1, GDI2, CHML and CHM; phosphorylation at Ser-85 disrupts this interaction. Requires Mg(2+) as cofactor. Post-translationally, phosphorylation of Ser-85 in the switch II region by LRRK2 prevents the association of RAB regulatory proteins, including CHM, CHML and RAB GDP dissociation inhibitors GDI1 and GDI2.

The protein resides in the cell membrane. The protein localises to the early endosome membrane. It is found in the melanosome. It catalyses the reaction GTP + H2O = GDP + phosphate + H(+). Its activity is regulated as follows. Regulated by guanine nucleotide exchange factors (GEFs) which promote the exchange of bound GDP for free GTP. Regulated by GTPase activating proteins (GAPs) which increase the GTP hydrolysis activity. Inhibited by GDP dissociation inhibitors (GDIs). The small GTPases Rab are key regulators of intracellular membrane trafficking, from the formation of transport vesicles to their fusion with membranes. Rabs cycle between an inactive GDP-bound form and an active GTP-bound form that is able to recruit to membranes different sets of downstream effectors directly responsible for vesicle formation, movement, tethering and fusion. This chain is Ras-related protein Rab-5C, found in Mus musculus (Mouse).